Consider the following 95-residue polypeptide: Aspartyl/glutamyl-tRNA(Asn/Gln) amidotransferase subunit C (95 aa).

It belongs to the GatC family. Heterotrimer of A, B and C subunits.

The catalysed reaction is L-glutamyl-tRNA(Gln) + L-glutamine + ATP + H2O = L-glutaminyl-tRNA(Gln) + L-glutamate + ADP + phosphate + H(+). It catalyses the reaction L-aspartyl-tRNA(Asn) + L-glutamine + ATP + H2O = L-asparaginyl-tRNA(Asn) + L-glutamate + ADP + phosphate + 2 H(+). Its function is as follows. Allows the formation of correctly charged Asn-tRNA(Asn) or Gln-tRNA(Gln) through the transamidation of misacylated Asp-tRNA(Asn) or Glu-tRNA(Gln) in organisms which lack either or both of asparaginyl-tRNA or glutaminyl-tRNA synthetases. The reaction takes place in the presence of glutamine and ATP through an activated phospho-Asp-tRNA(Asn) or phospho-Glu-tRNA(Gln). This chain is Aspartyl/glutamyl-tRNA(Asn/Gln) amidotransferase subunit C, found in Bradyrhizobium sp. (strain BTAi1 / ATCC BAA-1182).